A 125-amino-acid chain; its full sequence is Phosphoribosyl-AMP cyclohydrolase (125 aa).

A Mg(2+)-binding site is contributed by Asp-91. Cys-92 lines the Zn(2+) pocket. Residues Asp-93 and Asp-95 each contribute to the Mg(2+) site. 2 residues coordinate Zn(2+): Cys-108 and Cys-115.

It belongs to the PRA-CH family. As to quaternary structure, homodimer. Requires Mg(2+) as cofactor. Zn(2+) is required as a cofactor.

The protein localises to the cytoplasm. The catalysed reaction is 1-(5-phospho-beta-D-ribosyl)-5'-AMP + H2O = 1-(5-phospho-beta-D-ribosyl)-5-[(5-phospho-beta-D-ribosylamino)methylideneamino]imidazole-4-carboxamide. It functions in the pathway amino-acid biosynthesis; L-histidine biosynthesis; L-histidine from 5-phospho-alpha-D-ribose 1-diphosphate: step 3/9. Its function is as follows. Catalyzes the hydrolysis of the adenine ring of phosphoribosyl-AMP. The chain is Phosphoribosyl-AMP cyclohydrolase from Streptomyces griseus subsp. griseus (strain JCM 4626 / CBS 651.72 / NBRC 13350 / KCC S-0626 / ISP 5235).